Reading from the N-terminus, the 624-residue chain is tRNA uridine 5-carboxymethylaminomethyl modification enzyme MnmG (624 aa).

Residues 13–18 (GGGHAG), Val-125, and Ser-180 contribute to the FAD site. 273-287 (GPRYCPSIEDKIVRF) lines the NAD(+) pocket. Position 370 (Gln-370) interacts with FAD.

Belongs to the MnmG family. Homodimer. Heterotetramer of two MnmE and two MnmG subunits. FAD is required as a cofactor.

It is found in the cytoplasm. Functionally, NAD-binding protein involved in the addition of a carboxymethylaminomethyl (cmnm) group at the wobble position (U34) of certain tRNAs, forming tRNA-cmnm(5)s(2)U34. This is tRNA uridine 5-carboxymethylaminomethyl modification enzyme MnmG from Legionella pneumophila (strain Paris).